Reading from the N-terminus, the 1382-residue chain is MGVFMTERADLVFHNKVIDGTAMKRLISRLIDHFGMGYTSHILDQSKILGFQQATATSISLGIDDLLTIPSKEWLVQDTEQQRFILEKHYHYANVHAVEKLRQSIEIWYATSEYLRQEMNPNFRMTDPSNPVHLMSFSGARGNASQVHQLVGMRGLMSDPQGQMIDLPIQSNLREGLSLTEYIISCYGARKGVVDTAVRTSDAGYLTRRLVEVVQHIIVRRTDCGTIRSISVSPRKGMTEKIFVQTLIGRVLADDIYMGLRCIAVRKQEIGIGLANRLITFRARPIYIRTPFTCRSTSWICQLCYGRSPTHGDLVELGEAVGIIASQSIGEPGTQLTLRTFHTGGVFTGGTAEHVRAPSSGKIKFNEDLVHRTRTRHGHPAFLCSIGLYVTLEGRDIIHNLNIPPKGLILVQNGQYVESEQLIAEIRAGAFTLNFKERVRKHIYSESEGEMHWSTNVYHAPEYPYGNIHLLLKTSHLWILAGASRRSSIVSFSLHKDQDQMNVHSFSVEERYIYIFDLSMTNHRVKHKLLDTSGKKDREILEYSISDRIISNGHWNLISPSILQDNLDFLAKRRRNRFIIPLQYDQEREKELIPCFDISIEIPINGILRGNSILAYFDDPVYRRSSSGITKYGTLEVDSIVKKEDLIEYRGTKEFNQIQIKVDRFFFIPEEVHILPGSSSIMVRNNSLIGVHTRLTLNTRSKIGGLVRVERKKKSIELKIFSGNIHFPGETDKISRHSGILIPPGTGKKNFNQSKKELKNWIYVQRITPTKKKYFVSVRPVVTYEIADGINLATLFPQDLLQEKDNVQLRVVNYILYGNGKSIRGIYHTSSQLVRTCLVLNWDQEQNDSIEEVHTSFIEVRANDLIRDFIRIDLIKSTISYTGKRNDTGSSGLIPDNGLNSTNINPFYSKSKIQSLTQDQETIGMGTLLNRNKECQSLIILSSSNCSQIGPFNGSKYKNVTKESENIIPIMDFLGSLGTIVPKIANFYSSYHLITHNQILLKRFLLLDNSKQTFQVLKYGLIDENSRIYSPDPCSNIILNPFRLNWCFLRHNYCEETSTIISLGQFFCENICLFKYGPNINIKKSGQIIIVHVDSLVIRSAKPYLVTLGATVHGHYGKILYEGDRLVTFIYERSRSGDITQGLPKVEQVLEVRSIDSISMNLEKRVNSWNECISRILGRPWGFMIGSELTIAQSRISLVNRIQKVYRSQGVQIHNRHIEIIVRQVTSRVLVSEDGMSNVFSPGELIGLLRAERAGRALDEAICYRAILLGITRASLNTQSFISEASFQETTRVLAKAALRGRIDWLKGLKENVVLGGIIPVGTGFQKLVHRSRQDKNIHLEIKKNNLFDLEMRDILLHHRELFCSCIQDNLYETSEQSFTNS.

Cys-224, Cys-294, Cys-301, and Cys-304 together coordinate Zn(2+).

The protein belongs to the RNA polymerase beta' chain family. RpoC2 subfamily. As to quaternary structure, in plastids the minimal PEP RNA polymerase catalytic core is composed of four subunits: alpha, beta, beta', and beta''. When a (nuclear-encoded) sigma factor is associated with the core the holoenzyme is formed, which can initiate transcription. The cofactor is Zn(2+).

Its subcellular location is the plastid. It localises to the chloroplast. It carries out the reaction RNA(n) + a ribonucleoside 5'-triphosphate = RNA(n+1) + diphosphate. Functionally, DNA-dependent RNA polymerase catalyzes the transcription of DNA into RNA using the four ribonucleoside triphosphates as substrates. This is DNA-directed RNA polymerase subunit beta'' from Dioscorea elephantipes (Elephant's foot yam).